The primary structure comprises 483 residues: Trigger factor (483 aa).

The PPIase FKBP-type domain maps to 166-251; that stretch reads TDTVNIDYVG…INDVFTKEKP (86 aa). The span at 435–460 shows a compositional bias: basic and acidic residues; that stretch reads GEEPKLSTTKKVVEPTEEKTRKDSKM. The interval 435 to 483 is disordered; that stretch reads GEEPKLSTTKKVVEPTEEKTRKDSKMSTKKPAAKPAAKPAAATKKPVKK. A compositionally biased stretch (low complexity) spans 467 to 483; that stretch reads AKPAAKPAAATKKPVKK.

It belongs to the FKBP-type PPIase family. Tig subfamily.

Its subcellular location is the cytoplasm. The catalysed reaction is [protein]-peptidylproline (omega=180) = [protein]-peptidylproline (omega=0). Its function is as follows. Involved in protein export. Acts as a chaperone by maintaining the newly synthesized protein in an open conformation. Functions as a peptidyl-prolyl cis-trans isomerase. This chain is Trigger factor, found in Mycoplasma mobile (strain ATCC 43663 / 163K / NCTC 11711) (Mesomycoplasma mobile).